The primary structure comprises 746 residues: Protein C-mannosyl-transferase DPY19L1 (746 aa).

The tract at residues 1-68 (MVLQARSKHR…RAETAAPAPD (68 aa)) is disordered. Residues 14–27 (PRPPRPARSSPPPL) are compositionally biased toward pro residues. 12 consecutive transmembrane segments (helical) span residues 93 to 113 (STLLLASFAALLHWSHITQLF), 139 to 159 (YSYFKTIVEAPSFLSGVWMIM), 227 to 247 (ACFYVAVIFMLNGLMMALFFI), 248 to 268 (YGTYLSGSRLGGLVTVLCFFF), 308 to 328 (YRGSLIALCISNVFFMLPWQF), 329 to 349 (AQFVLLTQIASLFAVYVVGYI), 357 to 377 (IIYTHMISLVLCFVLMFGNSM), 378 to 398 (LLTSYYASSLVIIWGMLAMKP), 405 to 425 (VSELSLWVIQGCCWLFGTVTL), 481 to 501 (LLLPVVLAIVAAIGRKIINDM), 520 to 540 (GELVYHALQLFAYTALGILIM), and 562 to 582 (LFGWLFGKVHPGAVVFAVLAA).

Belongs to the dpy-19 family.

The protein localises to the endoplasmic reticulum membrane. The enzyme catalyses L-tryptophyl-[protein] + a di-trans,poly-cis-dolichyl beta-D-mannosyl phosphate = C-alpha-D-mannosyl-L-tryptophyl-[protein] + a di-trans,poly-cis-dolichyl phosphate + H(+). It participates in protein modification; protein glycosylation. Its function is as follows. C-mannosyltransferase that mediates the C-mannosylation tryptophan residues on target proteins. The reaction occurs on the luminal side of the endoplasmic reticulum and involves the transfer of a mannose unit from a dolichylphosphate mannose (Dol-P-Man) donor to an acceptor protein containing a WxxW consensus sequence. C-mannosylates the first two tryptophans in the WxxWxxWxxC sequence motif in thrombospondin (TSP) type-1 repeats of UNC5A. Regulates neurite extension during development. The chain is Protein C-mannosyl-transferase DPY19L1 (Dpy19l1) from Rattus norvegicus (Rat).